Reading from the N-terminus, the 487-residue chain is MVTKTLSIVFVASEVDGLIKSGGLADVAKALPKSLKELGHSVQIVMPAYKTIAGRDDAEIILTTQLEHWPHTAYQVRSLSIDGISVFAIESGDYFERAEMYAENNQAYADNGERFAFFSAATLDLLPKLLNKKPDIIHVNDWHTGLIPYLLKKRYAENEFYHQTRSVLSIHNAVFKGIFHYDEIACLSEFKSHFVPEASISHTHVSMLKAGVQCADKINAVSPNYAKELLTELGSHGMASDFQDRESDLIGILNGCDYSEWNPEKDSYIPKQFKVNRISMVRGKKACKAALQQEVSLPQKDVAMYGMVCRLTNQKGIQYLLPILEQFLKNDLQLVIVGTGDPVLAARLTEIAQEHSDKFAFIEAYDNKLAHWVEAGSDFFIMPSEFEPCGLNQIYSMAYGTLPIVREVGGLKDSVNNYDDDIENATGFSFKNPEPMELLLVLMRSLLLYSQNLNEVKRVQLHAMKQDFCWNKAALKYIEMYRTTINS.

Residue lysine 20 coordinates ADP-alpha-D-glucose.

The protein belongs to the glycosyltransferase 1 family. Bacterial/plant glycogen synthase subfamily.

The enzyme catalyses [(1-&gt;4)-alpha-D-glucosyl](n) + ADP-alpha-D-glucose = [(1-&gt;4)-alpha-D-glucosyl](n+1) + ADP + H(+). It functions in the pathway glycan biosynthesis; glycogen biosynthesis. Synthesizes alpha-1,4-glucan chains using ADP-glucose. In Aliivibrio fischeri (strain MJ11) (Vibrio fischeri), this protein is Glycogen synthase.